A 482-amino-acid polypeptide reads, in one-letter code: Cytochrome c-552 (482 aa).

The signal sequence occupies residues 1 to 26 (MIKVSNALQRILIGAALALFGGGAQA). Residue His-98 coordinates heme c. Cys-126, Cys-129, and Lys-130 together coordinate heme. Cys-164, Cys-167, His-168, Cys-213, Cys-216, and His-217 together coordinate heme c. Ca(2+)-binding residues include Glu-219, Tyr-220, Lys-265, and Gln-267. Residue Tyr-220 coordinates substrate. His-268 serves as a coordination point for substrate. Positions 279, 286, 289, 290, 305, 318, 321, 322, and 397 each coordinate heme c.

It belongs to the cytochrome c-552 family. Ca(2+) is required as a cofactor. Requires heme c as cofactor.

The protein localises to the periplasm. It catalyses the reaction 6 Fe(III)-[cytochrome c] + NH4(+) + 2 H2O = 6 Fe(II)-[cytochrome c] + nitrite + 8 H(+). It participates in nitrogen metabolism; nitrate reduction (assimilation). Catalyzes the reduction of nitrite to ammonia, consuming six electrons in the process. This chain is Cytochrome c-552, found in Edwardsiella ictaluri (strain 93-146).